A 93-amino-acid polypeptide reads, in one-letter code: CRISPR-associated endoribonuclease Cas2 3 (93 aa).

Aspartate 10 contacts Mg(2+).

It belongs to the CRISPR-associated endoribonuclease Cas2 protein family. In terms of assembly, homodimer, forms a heterotetramer with a Cas1 homodimer. Mg(2+) is required as a cofactor.

CRISPR (clustered regularly interspaced short palindromic repeat), is an adaptive immune system that provides protection against mobile genetic elements (viruses, transposable elements and conjugative plasmids). CRISPR clusters contain sequences complementary to antecedent mobile elements and target invading nucleic acids. CRISPR clusters are transcribed and processed into CRISPR RNA (crRNA). Functions as a ssRNA-specific endoribonuclease. Involved in the integration of spacer DNA into the CRISPR cassette. This chain is CRISPR-associated endoribonuclease Cas2 3, found in Chloroflexus aurantiacus (strain ATCC 29366 / DSM 635 / J-10-fl).